Reading from the N-terminus, the 311-residue chain is HPr kinase/phosphorylase (311 aa).

Residues His138 and Lys159 contribute to the active site. 153-160 lines the ATP pocket; the sequence is GDSGIGKS. Ser160 serves as a coordination point for Mg(2+). The Proton acceptor; for phosphorylation activity. Proton donor; for dephosphorylation activity role is filled by Asp177. Positions 201 to 210 are important for the catalytic mechanism of both phosphorylation and dephosphorylation; it reads IEIRGVGIID. Glu202 serves as a coordination point for Mg(2+). Arg243 is an active-site residue. The interval 264-269 is important for the catalytic mechanism of dephosphorylation; the sequence is PVKTGR.

Belongs to the HPrK/P family. As to quaternary structure, homohexamer. Requires Mg(2+) as cofactor.

It catalyses the reaction [HPr protein]-L-serine + ATP = [HPr protein]-O-phospho-L-serine + ADP + H(+). The catalysed reaction is [HPr protein]-O-phospho-L-serine + phosphate + H(+) = [HPr protein]-L-serine + diphosphate. Catalyzes the ATP- as well as the pyrophosphate-dependent phosphorylation of a specific serine residue in HPr, a phosphocarrier protein of the phosphoenolpyruvate-dependent sugar phosphotransferase system (PTS). HprK/P also catalyzes the pyrophosphate-producing, inorganic phosphate-dependent dephosphorylation (phosphorolysis) of seryl-phosphorylated HPr (P-Ser-HPr). The two antagonistic activities of HprK/P are regulated by several intracellular metabolites, which change their concentration in response to the absence or presence of rapidly metabolisable carbon sources (glucose, fructose, etc.) in the growth medium. Therefore, by controlling the phosphorylation state of HPr, HPrK/P is a sensor enzyme that plays a major role in the regulation of carbon metabolism and sugar transport: it mediates carbon catabolite repression (CCR), and regulates PTS-catalyzed carbohydrate uptake and inducer exclusion. The sequence is that of HPr kinase/phosphorylase from Streptococcus pneumoniae serotype 2 (strain D39 / NCTC 7466).